Here is a 175-residue protein sequence, read N- to C-terminus: Translation initiation factor IF-3 (175 aa).

Belongs to the IF-3 family. In terms of assembly, monomer.

The protein resides in the cytoplasm. Its function is as follows. IF-3 binds to the 30S ribosomal subunit and shifts the equilibrium between 70S ribosomes and their 50S and 30S subunits in favor of the free subunits, thus enhancing the availability of 30S subunits on which protein synthesis initiation begins. The protein is Translation initiation factor IF-3 of Chromobacterium violaceum (strain ATCC 12472 / DSM 30191 / JCM 1249 / CCUG 213 / NBRC 12614 / NCIMB 9131 / NCTC 9757 / MK).